Consider the following 638-residue polypeptide: Threonine--tRNA ligase (638 aa).

The 61-residue stretch at 1–61 (MPIITLPDGS…NSDSKVVIIT (61 aa)) folds into the TGS domain. The segment at 242–533 (DHRKLGKKHS…LIEQYEAKFP (292 aa)) is catalytic. Residues C333, H384, and H510 each contribute to the Zn(2+) site.

This sequence belongs to the class-II aminoacyl-tRNA synthetase family. In terms of assembly, homodimer. The cofactor is Zn(2+).

It localises to the cytoplasm. The catalysed reaction is tRNA(Thr) + L-threonine + ATP = L-threonyl-tRNA(Thr) + AMP + diphosphate + H(+). Its function is as follows. Catalyzes the attachment of threonine to tRNA(Thr) in a two-step reaction: L-threonine is first activated by ATP to form Thr-AMP and then transferred to the acceptor end of tRNA(Thr). Also edits incorrectly charged L-seryl-tRNA(Thr). The polypeptide is Threonine--tRNA ligase (Prochlorococcus marinus (strain MIT 9215)).